Here is a 152-residue protein sequence, read N- to C-terminus: Small ribosomal subunit protein uS15 (152 aa).

Basic residues predominate over residues 1-11 (MAKMHTKRKGK). Positions 1–22 (MAKMHTKRKGKSSSTRPIRTEP) are disordered.

Belongs to the universal ribosomal protein uS15 family. As to quaternary structure, part of the 30S ribosomal subunit.

The polypeptide is Small ribosomal subunit protein uS15 (Methanosarcina barkeri (strain Fusaro / DSM 804)).